The following is a 315-amino-acid chain: 4-hydroxy-3-methylbut-2-enyl diphosphate reductase (315 aa).

Cys12 contacts [4Fe-4S] cluster. His41 and His74 together coordinate (2E)-4-hydroxy-3-methylbut-2-enyl diphosphate. Dimethylallyl diphosphate contacts are provided by His41 and His74. 2 residues coordinate isopentenyl diphosphate: His41 and His74. Cys96 serves as a coordination point for [4Fe-4S] cluster. His124 lines the (2E)-4-hydroxy-3-methylbut-2-enyl diphosphate pocket. His124 contributes to the dimethylallyl diphosphate binding site. His124 provides a ligand contact to isopentenyl diphosphate. Glu126 functions as the Proton donor in the catalytic mechanism. Thr168 is a (2E)-4-hydroxy-3-methylbut-2-enyl diphosphate binding site. Cys198 contacts [4Fe-4S] cluster. Ser226, Ser227, Asn228, and Ser270 together coordinate (2E)-4-hydroxy-3-methylbut-2-enyl diphosphate. Ser226, Ser227, Asn228, and Ser270 together coordinate dimethylallyl diphosphate. The isopentenyl diphosphate site is built by Ser226, Ser227, Asn228, and Ser270.

The protein belongs to the IspH family. [4Fe-4S] cluster is required as a cofactor.

It catalyses the reaction isopentenyl diphosphate + 2 oxidized [2Fe-2S]-[ferredoxin] + H2O = (2E)-4-hydroxy-3-methylbut-2-enyl diphosphate + 2 reduced [2Fe-2S]-[ferredoxin] + 2 H(+). It carries out the reaction dimethylallyl diphosphate + 2 oxidized [2Fe-2S]-[ferredoxin] + H2O = (2E)-4-hydroxy-3-methylbut-2-enyl diphosphate + 2 reduced [2Fe-2S]-[ferredoxin] + 2 H(+). It functions in the pathway isoprenoid biosynthesis; dimethylallyl diphosphate biosynthesis; dimethylallyl diphosphate from (2E)-4-hydroxy-3-methylbutenyl diphosphate: step 1/1. The protein operates within isoprenoid biosynthesis; isopentenyl diphosphate biosynthesis via DXP pathway; isopentenyl diphosphate from 1-deoxy-D-xylulose 5-phosphate: step 6/6. Functionally, catalyzes the conversion of 1-hydroxy-2-methyl-2-(E)-butenyl 4-diphosphate (HMBPP) into a mixture of isopentenyl diphosphate (IPP) and dimethylallyl diphosphate (DMAPP). Acts in the terminal step of the DOXP/MEP pathway for isoprenoid precursor biosynthesis. In Pseudomonas entomophila (strain L48), this protein is 4-hydroxy-3-methylbut-2-enyl diphosphate reductase.